A 419-amino-acid chain; its full sequence is Phosphatidylinositol 5-phosphate 4-kinase type-2 gamma (419 aa).

Residues 46–418 form the PIPK domain; the sequence is ASDPLISVFM…RFLEFVTNIF (373 aa). Acidic residues predominate over residues 299–310; sequence QEEEEDLEEDHT. The interval 299–320 is disordered; sequence QEEEEDLEEDHTENESSPHMNV.

Phosphorylated, phosphorylation is induced by EGF.

It localises to the endoplasmic reticulum. The protein resides in the cytoplasm. It catalyses the reaction a 1,2-diacyl-sn-glycero-3-phospho-(1D-myo-inositol-5-phosphate) + ATP = a 1,2-diacyl-sn-glycero-3-phospho-(1D-myo-inositol-4,5-bisphosphate) + ADP + H(+). The catalysed reaction is 1,2-dihexadecanoyl-sn-glycero-3-phospho-(1D-myo-inositol-5-phosphate) + ATP = 1,2-dihexadecanoyl-sn-glycero-3-phospho-(1D-myo-inositol-4,5-bisphosphate) + ADP + H(+). The enzyme catalyses 1,2-dihexadecanoyl-sn-glycero-3-phospho-(1D-myo-inositol-5-phosphate) + GTP = 1,2-dihexadecanoyl-sn-glycero-3-phospho-(1D-myo-inositol-4,5-bisphosphate) + GDP + H(+). Its function is as follows. Phosphatidylinositol 5-phosphate 4-kinase with low enzymatic activity. May be a GTP sensor, has higher GTP-dependent kinase activity than ATP-dependent kinase activity. The chain is Phosphatidylinositol 5-phosphate 4-kinase type-2 gamma (pip4k2c) from Xenopus tropicalis (Western clawed frog).